The following is a 265-amino-acid chain: Undecaprenyl-diphosphatase (265 aa).

A run of 7 helical transmembrane segments spans residues 42–62 (AATFEVAIQLGAILAVVVLYW), 82–102 (GIMLLLLTSLPASVLGLAAHS), 108–128 (LFTPSTVAIALAVGAIFMLLV), 143–163 (MSPALALGIGCFQCLALWPGF), 181–201 (GLAAEYSFIAAVPIMFAATGY), 221–241 (GFVVSFLSAWAAVKLFIALVG), and 248–264 (FAWYRLAIAPLVYYFMA).

The protein belongs to the UppP family.

The protein localises to the cell inner membrane. The enzyme catalyses di-trans,octa-cis-undecaprenyl diphosphate + H2O = di-trans,octa-cis-undecaprenyl phosphate + phosphate + H(+). Catalyzes the dephosphorylation of undecaprenyl diphosphate (UPP). Confers resistance to bacitracin. The chain is Undecaprenyl-diphosphatase from Nitratidesulfovibrio vulgaris (strain DP4) (Desulfovibrio vulgaris).